Reading from the N-terminus, the 380-residue chain is Queuine tRNA-ribosyltransferase (380 aa).

Asp-96 serves as the catalytic Proton acceptor. Substrate-binding positions include 96-100, Asp-150, Gln-193, and Gly-220; that span reads DSGGF. The segment at 251–257 is RNA binding; sequence GVGAPDS. The active-site Nucleophile is the Asp-270. The RNA binding; important for wobble base 34 recognition stretch occupies residues 275-279; sequence TRIAR. Positions 308, 310, 313, and 339 each coordinate Zn(2+).

Belongs to the queuine tRNA-ribosyltransferase family. In terms of assembly, homodimer. Within each dimer, one monomer is responsible for RNA recognition and catalysis, while the other monomer binds to the replacement base PreQ1. It depends on Zn(2+) as a cofactor.

It carries out the reaction 7-aminomethyl-7-carbaguanine + guanosine(34) in tRNA = 7-aminomethyl-7-carbaguanosine(34) in tRNA + guanine. Its pathway is tRNA modification; tRNA-queuosine biosynthesis. In terms of biological role, catalyzes the base-exchange of a guanine (G) residue with the queuine precursor 7-aminomethyl-7-deazaguanine (PreQ1) at position 34 (anticodon wobble position) in tRNAs with GU(N) anticodons (tRNA-Asp, -Asn, -His and -Tyr). Catalysis occurs through a double-displacement mechanism. The nucleophile active site attacks the C1' of nucleotide 34 to detach the guanine base from the RNA, forming a covalent enzyme-RNA intermediate. The proton acceptor active site deprotonates the incoming PreQ1, allowing a nucleophilic attack on the C1' of the ribose to form the product. After dissociation, two additional enzymatic reactions on the tRNA convert PreQ1 to queuine (Q), resulting in the hypermodified nucleoside queuosine (7-(((4,5-cis-dihydroxy-2-cyclopenten-1-yl)amino)methyl)-7-deazaguanosine). The polypeptide is Queuine tRNA-ribosyltransferase (Streptococcus equi subsp. equi (strain 4047)).